The chain runs to 429 residues: Enolase (429 aa).

Glutamine 164 lines the (2R)-2-phosphoglycerate pocket. Glutamate 206 (proton donor) is an active-site residue. Mg(2+)-binding residues include aspartate 243, glutamate 286, and aspartate 313. (2R)-2-phosphoglycerate is bound by residues lysine 338, arginine 367, serine 368, and lysine 389. Lysine 338 functions as the Proton acceptor in the catalytic mechanism.

Belongs to the enolase family. Mg(2+) is required as a cofactor.

Its subcellular location is the cytoplasm. It is found in the secreted. It localises to the cell surface. It catalyses the reaction (2R)-2-phosphoglycerate = phosphoenolpyruvate + H2O. It participates in carbohydrate degradation; glycolysis; pyruvate from D-glyceraldehyde 3-phosphate: step 4/5. Catalyzes the reversible conversion of 2-phosphoglycerate (2-PG) into phosphoenolpyruvate (PEP). It is essential for the degradation of carbohydrates via glycolysis. In Thermotoga sp. (strain RQ2), this protein is Enolase.